The following is a 341-amino-acid chain: uncharacterized protein (341 aa).

4 helical membrane passes run 8 to 28 (LMLT…PLII), 63 to 83 (LMYF…VFAL), 171 to 191 (IYIM…IALS), and 317 to 337 (EFLV…KIFL). In terms of domain architecture, VWFA spans 101–305 (DIVIVLDISP…SKKENLERKI (205 aa)).

The protein localises to the cell membrane. This is an uncharacterized protein from Borreliella burgdorferi (strain ATCC 35210 / DSM 4680 / CIP 102532 / B31) (Borrelia burgdorferi).